The following is an 86-amino-acid chain: MSKGHSLQDPYLNTLRKEKVGVSIYLVNGIKLQGTIESFDQFVILLKNTVSQMVYKHAISTVVPVRPIRLPSATESEAGDAEPGNA.

The Sm domain maps to 9–68 (DPYLNTLRKEKVGVSIYLVNGIKLQGTIESFDQFVILLKNTVSQMVYKHAISTVVPVRPI).

It belongs to the Hfq family. As to quaternary structure, homohexamer.

In terms of biological role, RNA chaperone that binds small regulatory RNA (sRNAs) and mRNAs to facilitate mRNA translational regulation in response to envelope stress, environmental stress and changes in metabolite concentrations. Also binds with high specificity to tRNAs. This is RNA-binding protein Hfq from Pseudomonas fluorescens (strain Pf0-1).